We begin with the raw amino-acid sequence, 467 residues long: ATP synthase subunit beta (467 aa).

Position 156 to 163 (glycine 156 to threonine 163) interacts with ATP.

It belongs to the ATPase alpha/beta chains family. In terms of assembly, F-type ATPases have 2 components, CF(1) - the catalytic core - and CF(0) - the membrane proton channel. CF(1) has five subunits: alpha(3), beta(3), gamma(1), delta(1), epsilon(1). CF(0) has three main subunits: a(1), b(2) and c(9-12). The alpha and beta chains form an alternating ring which encloses part of the gamma chain. CF(1) is attached to CF(0) by a central stalk formed by the gamma and epsilon chains, while a peripheral stalk is formed by the delta and b chains.

Its subcellular location is the cell inner membrane. It carries out the reaction ATP + H2O + 4 H(+)(in) = ADP + phosphate + 5 H(+)(out). Functionally, produces ATP from ADP in the presence of a proton gradient across the membrane. The catalytic sites are hosted primarily by the beta subunits. This chain is ATP synthase subunit beta, found in Cupriavidus metallidurans (strain ATCC 43123 / DSM 2839 / NBRC 102507 / CH34) (Ralstonia metallidurans).